The primary structure comprises 485 residues: Aspartyl/glutamyl-tRNA(Asn/Gln) amidotransferase subunit B (485 aa).

This sequence belongs to the GatB/GatE family. GatB subfamily. Heterotrimer of A, B and C subunits.

It carries out the reaction L-glutamyl-tRNA(Gln) + L-glutamine + ATP + H2O = L-glutaminyl-tRNA(Gln) + L-glutamate + ADP + phosphate + H(+). It catalyses the reaction L-aspartyl-tRNA(Asn) + L-glutamine + ATP + H2O = L-asparaginyl-tRNA(Asn) + L-glutamate + ADP + phosphate + 2 H(+). Functionally, allows the formation of correctly charged Asn-tRNA(Asn) or Gln-tRNA(Gln) through the transamidation of misacylated Asp-tRNA(Asn) or Glu-tRNA(Gln) in organisms which lack either or both of asparaginyl-tRNA or glutaminyl-tRNA synthetases. The reaction takes place in the presence of glutamine and ATP through an activated phospho-Asp-tRNA(Asn) or phospho-Glu-tRNA(Gln). In Borrelia recurrentis (strain A1), this protein is Aspartyl/glutamyl-tRNA(Asn/Gln) amidotransferase subunit B.